An 84-amino-acid polypeptide reads, in one-letter code: uncharacterized protein (84 aa).

Positions 1-21 (MYYRRQGEPQEMYGNGNNSVS) are disordered. Residues 49–69 (YIIYAIVAAILLLLFWLLYKK) traverse the membrane as a helical segment.

It is found in the membrane. This is an uncharacterized protein from Invertebrate iridescent virus 6 (IIV-6).